Consider the following 739-residue polypeptide: DNA ligase (739 aa).

NAD(+) is bound by residues 34–38 (DADYD), 83–84 (SL), and glutamate 117. Lysine 119 functions as the N6-AMP-lysine intermediate in the catalytic mechanism. NAD(+) contacts are provided by arginine 140, glutamate 175, lysine 291, and lysine 315. 4 residues coordinate Zn(2+): cysteine 420, cysteine 423, cysteine 438, and cysteine 444. The BRCT domain occupies 660–739 (ADDSPVAGKT…DGWLDLIGQA (80 aa)).

It belongs to the NAD-dependent DNA ligase family. LigA subfamily. Requires Mg(2+) as cofactor. Mn(2+) is required as a cofactor.

It carries out the reaction NAD(+) + (deoxyribonucleotide)n-3'-hydroxyl + 5'-phospho-(deoxyribonucleotide)m = (deoxyribonucleotide)n+m + AMP + beta-nicotinamide D-nucleotide.. Functionally, DNA ligase that catalyzes the formation of phosphodiester linkages between 5'-phosphoryl and 3'-hydroxyl groups in double-stranded DNA using NAD as a coenzyme and as the energy source for the reaction. It is essential for DNA replication and repair of damaged DNA. The polypeptide is DNA ligase (Ruegeria sp. (strain TM1040) (Silicibacter sp.)).